Consider the following 221-residue polypeptide: Thymidylate kinase (221 aa).

ATP is bound at residue 11-18; it reads GPDGAGKT.

This sequence belongs to the thymidylate kinase family.

The enzyme catalyses dTMP + ATP = dTDP + ADP. Phosphorylation of dTMP to form dTDP in both de novo and salvage pathways of dTTP synthesis. This Lactiplantibacillus plantarum (strain ATCC BAA-793 / NCIMB 8826 / WCFS1) (Lactobacillus plantarum) protein is Thymidylate kinase.